A 469-amino-acid polypeptide reads, in one-letter code: Neuraminidase (469 aa).

Residues 1 to 9 (MNPNQKIIT) are Intravirion-facing. A helical membrane pass occupies residues 10 to 30 (IGSVSLTIATICFLMQIAILV). Residues 11-33 (GSVSLTIATICFLMQIAILVTTV) form an involved in apical transport and lipid raft association region. Over 31–469 (TTVTLHFKQY…DGADINLMPI (439 aa)) the chain is Virion surface. Positions 36-88 (HFKQYECDSPANNQVMPCEPISIERNITEIVYLTNTTIEKEICPKLVEYRNWS) are hypervariable stalk region. Asn61, Asn70, and Asn86 each carry an N-linked (GlcNAc...) asparagine; by host glycan. Residues 91 to 469 (QCKITGFAPF…DGADINLMPI (379 aa)) form a head of neuraminidase region. 8 disulfide bridges follow: Cys92–Cys417, Cys124–Cys129, Cys183–Cys230, Cys232–Cys237, Cys278–Cys291, Cys280–Cys289, Cys318–Cys337, and Cys421–Cys447. A substrate-binding site is contributed by Arg118. An N-linked (GlcNAc...) asparagine; by host glycan is attached at Asn146. Residue Asp151 is the Proton donor/acceptor of the active site. Substrate is bound at residue Arg152. Residues Asn200 and Asn234 are each glycosylated (N-linked (GlcNAc...) asparagine; by host). 276–277 (EE) is a binding site for substrate. Substrate is bound at residue Arg292. Ca(2+) contacts are provided by Asp293, Gly297, and Asp324. Residue Arg371 coordinates substrate. A glycan (N-linked (GlcNAc...) asparagine; by host) is linked at Asn402. Tyr406 acts as the Nucleophile in catalysis.

The protein belongs to the glycosyl hydrolase 34 family. In terms of assembly, homotetramer. The cofactor is Ca(2+). In terms of processing, N-glycosylated.

It localises to the virion membrane. It is found in the host apical cell membrane. The catalysed reaction is Hydrolysis of alpha-(2-&gt;3)-, alpha-(2-&gt;6)-, alpha-(2-&gt;8)- glycosidic linkages of terminal sialic acid residues in oligosaccharides, glycoproteins, glycolipids, colominic acid and synthetic substrates.. Inhibited by the neuraminidase inhibitors zanamivir (Relenza) and oseltamivir (Tamiflu). These drugs interfere with the release of progeny virus from infected cells and are effective against all influenza strains. Resistance to neuraminidase inhibitors is quite rare. Catalyzes the removal of terminal sialic acid residues from viral and cellular glycoconjugates. Cleaves off the terminal sialic acids on the glycosylated HA during virus budding to facilitate virus release. Additionally helps virus spread through the circulation by further removing sialic acids from the cell surface. These cleavages prevent self-aggregation and ensure the efficient spread of the progeny virus from cell to cell. Otherwise, infection would be limited to one round of replication. Described as a receptor-destroying enzyme because it cleaves a terminal sialic acid from the cellular receptors. May facilitate viral invasion of the upper airways by cleaving the sialic acid moieties on the mucin of the airway epithelial cells. Likely to plays a role in the budding process through its association with lipid rafts during intracellular transport. May additionally display a raft-association independent effect on budding. Plays a role in the determination of host range restriction on replication and virulence. Sialidase activity in late endosome/lysosome traffic seems to enhance virus replication. The protein is Neuraminidase of Aves (whales).